Reading from the N-terminus, the 399-residue chain is Elongation factor Tu (399 aa).

In terms of domain architecture, tr-type G spans 10-209 (KPHVNIGTIG…AVDEYIPTPE (200 aa)). A G1 region spans residues 19–26 (GHVDHGKT). 19 to 26 (GHVDHGKT) provides a ligand contact to GTP. Mg(2+) is bound at residue Thr-26. The segment at 60–64 (GITIA) is G2. The interval 81 to 84 (DCPG) is G3. GTP-binding positions include 81–85 (DCPGH) and 136–139 (NKED). Residues 136–139 (NKED) form a G4 region. A G5 region spans residues 174–176 (SAL).

This sequence belongs to the TRAFAC class translation factor GTPase superfamily. Classic translation factor GTPase family. EF-Tu/EF-1A subfamily. As to quaternary structure, monomer.

The protein resides in the cytoplasm. It carries out the reaction GTP + H2O = GDP + phosphate + H(+). Its function is as follows. GTP hydrolase that promotes the GTP-dependent binding of aminoacyl-tRNA to the A-site of ribosomes during protein biosynthesis. In Nitratiruptor sp. (strain SB155-2), this protein is Elongation factor Tu.